The sequence spans 199 residues: MTTLTAQQIACVYAWLAQLFSRELDDEQLTQIASAQMAEWFSLLKSEPPLTAAVNGLENSIATLTVRDDARLELAADFCGLFLMTDKQAALPYASAYKQDEQEIKRLLVEAGMETSGNFNEPADHLAIYPELLSHLHFSLGEGTVPARRIDGLRQKTLTALREWLPEFAARCRQYDRFGFYAALSQLLLVLVECDYQKR.

It belongs to the TorD/DmsD family. TorD subfamily.

It localises to the cytoplasm. Its function is as follows. Involved in the biogenesis of TorA. Acts on TorA before the insertion of the molybdenum cofactor and, as a result, probably favors a conformation of the apoenzyme that is competent for acquiring the cofactor. This Escherichia coli O6:H1 (strain CFT073 / ATCC 700928 / UPEC) protein is Chaperone protein TorD.